Here is a 98-residue protein sequence, read N- to C-terminus: Aspartyl/glutamyl-tRNA(Asn/Gln) amidotransferase subunit C (98 aa).

The protein belongs to the GatC family. In terms of assembly, heterotrimer of A, B and C subunits.

The enzyme catalyses L-glutamyl-tRNA(Gln) + L-glutamine + ATP + H2O = L-glutaminyl-tRNA(Gln) + L-glutamate + ADP + phosphate + H(+). The catalysed reaction is L-aspartyl-tRNA(Asn) + L-glutamine + ATP + H2O = L-asparaginyl-tRNA(Asn) + L-glutamate + ADP + phosphate + 2 H(+). Allows the formation of correctly charged Asn-tRNA(Asn) or Gln-tRNA(Gln) through the transamidation of misacylated Asp-tRNA(Asn) or Glu-tRNA(Gln) in organisms which lack either or both of asparaginyl-tRNA or glutaminyl-tRNA synthetases. The reaction takes place in the presence of glutamine and ATP through an activated phospho-Asp-tRNA(Asn) or phospho-Glu-tRNA(Gln). The sequence is that of Aspartyl/glutamyl-tRNA(Asn/Gln) amidotransferase subunit C from Beutenbergia cavernae (strain ATCC BAA-8 / DSM 12333 / CCUG 43141 / JCM 11478 / NBRC 16432 / NCIMB 13614 / HKI 0122).